The sequence spans 318 residues: NADH-ubiquinone oxidoreductase chain 1 (318 aa).

The next 8 helical transmembrane spans lie at 2 to 22 (FMIN…FLTL), 68 to 88 (ISMF…MWTP), 100 to 120 (LGVL…LWSG), 146 to 166 (LAII…PTLI), 171 to 191 (HMWL…STLA), 222 to 242 (LFFL…TILF), 253 to 273 (ELYT…FLWV), and 293 to 313 (FLPL…ITAG).

Belongs to the complex I subunit 1 family. As to quaternary structure, core subunit of respiratory chain NADH dehydrogenase (Complex I) which is composed of 45 different subunits.

Its subcellular location is the mitochondrion inner membrane. It carries out the reaction a ubiquinone + NADH + 5 H(+)(in) = a ubiquinol + NAD(+) + 4 H(+)(out). Its function is as follows. Core subunit of the mitochondrial membrane respiratory chain NADH dehydrogenase (Complex I) which catalyzes electron transfer from NADH through the respiratory chain, using ubiquinone as an electron acceptor. Essential for the catalytic activity and assembly of complex I. In Hipposideros diadema (Diadem leaf-nosed bat), this protein is NADH-ubiquinone oxidoreductase chain 1 (MT-ND1).